A 611-amino-acid chain; its full sequence is Dihydroxy-acid dehydratase (611 aa).

Residue Asp81 coordinates Mg(2+). Residue Cys122 coordinates [2Fe-2S] cluster. Positions 123 and 124 each coordinate Mg(2+). An N6-carboxylysine modification is found at Lys124. Cys195 is a [2Fe-2S] cluster binding site. Glu491 is a Mg(2+) binding site. The Proton acceptor role is filled by Ser517.

This sequence belongs to the IlvD/Edd family. In terms of assembly, homodimer. Requires [2Fe-2S] cluster as cofactor. The cofactor is Mg(2+).

The enzyme catalyses (2R)-2,3-dihydroxy-3-methylbutanoate = 3-methyl-2-oxobutanoate + H2O. The catalysed reaction is (2R,3R)-2,3-dihydroxy-3-methylpentanoate = (S)-3-methyl-2-oxopentanoate + H2O. It functions in the pathway amino-acid biosynthesis; L-isoleucine biosynthesis; L-isoleucine from 2-oxobutanoate: step 3/4. Its pathway is amino-acid biosynthesis; L-valine biosynthesis; L-valine from pyruvate: step 3/4. Its function is as follows. Functions in the biosynthesis of branched-chain amino acids. Catalyzes the dehydration of (2R,3R)-2,3-dihydroxy-3-methylpentanoate (2,3-dihydroxy-3-methylvalerate) into 2-oxo-3-methylpentanoate (2-oxo-3-methylvalerate) and of (2R)-2,3-dihydroxy-3-methylbutanoate (2,3-dihydroxyisovalerate) into 2-oxo-3-methylbutanoate (2-oxoisovalerate), the penultimate precursor to L-isoleucine and L-valine, respectively. The sequence is that of Dihydroxy-acid dehydratase from Brucella abortus (strain S19).